Here is a 590-residue protein sequence, read N- to C-terminus: (+)-sabinene synthase, chloroplastic (590 aa).

Residues M1–I51 constitute a chloroplast transit peptide. Positions 343, 347, 487, 491, and 495 each coordinate Mg(2+). A DDXXD motif motif is present at residues D343–D347.

This sequence belongs to the terpene synthase family. In terms of assembly, monomer. The cofactor is Mg(2+).

Its subcellular location is the plastid. The protein localises to the chloroplast. The catalysed reaction is (2E)-geranyl diphosphate = (1R,5R)-sabinene + diphosphate. It participates in terpene metabolism; sabinene hydrate biosynthesis. Catalyzes the formation of the (-)-3-isothujone precursor sabinene from geranyl diphosphate. The enzyme also produces significant amounts of gamma-terpinene, terpinolene and limonene. The sequence is that of (+)-sabinene synthase, chloroplastic from Salvia officinalis (Sage).